The following is a 192-amino-acid chain: uncharacterized protein (192 aa).

Positions 53-111 (CLKESVERARKVYLSLLKDYERKSREYEKAYENYLKELRTYRETLYRIKEDLKFYERIC) form a coiled coil.

This is an uncharacterized protein from Aquifex aeolicus (strain VF5).